We begin with the raw amino-acid sequence, 287 residues long: ATP synthase gamma chain (287 aa).

Belongs to the ATPase gamma chain family. In terms of assembly, F-type ATPases have 2 components, CF(1) - the catalytic core - and CF(0) - the membrane proton channel. CF(1) has five subunits: alpha(3), beta(3), gamma(1), delta(1), epsilon(1). CF(0) has three main subunits: a, b and c.

The protein localises to the cell inner membrane. Its function is as follows. Produces ATP from ADP in the presence of a proton gradient across the membrane. The gamma chain is believed to be important in regulating ATPase activity and the flow of protons through the CF(0) complex. The protein is ATP synthase gamma chain of Xylella fastidiosa (strain 9a5c).